A 295-amino-acid polypeptide reads, in one-letter code: Signal-transducing adaptor protein 1 (295 aa).

One can recognise a PH domain in the interval 25-121; the sequence is PLYFEGFLLI…WRGFILTVTE (97 aa). Phosphotyrosine is present on tyrosine 168. An SH2 domain is found at 177-280; that stretch reads ACFYTVSRKE…TDENTGQEPS (104 aa). Positions 270–295 are disordered; sequence STDENTGQEPSMEGRSEKLKKNPHIA.

As to quaternary structure, interacts with KIT and CSF1R. Interacts with URI1; the interaction is phosphorylation-dependent and occurs in a growth-dependent manner. In terms of processing, phosphorylated on tyrosine by TEC. Phosphorylated on tyrosine by KIT.

The protein localises to the nucleus. It is found in the cytoplasm. The protein resides in the mitochondrion. Its function is as follows. In BCR signaling, appears to function as a docking protein acting downstream of TEC and participates in a positive feedback loop by increasing the activity of TEC. This is Signal-transducing adaptor protein 1 (STAP1) from Homo sapiens (Human).